Reading from the N-terminus, the 821-residue chain is Nitrogen permease regulator 3 (821 aa).

Residues 1–21 (MSLNLPNPSILGILLVVSTHS) form the signal peptide. Disordered regions lie at residues 29-64 (YPPD…ELDI), 116-194 (RQTS…GIPP), 246-283 (GSWK…DYET), and 654-694 (ENEG…PEDI). The span at 116–142 (RQTSQERNKIYGHKQSDSHIDPDEIKS) shows a compositional bias: basic and acidic residues. The span at 170-192 (KKTISSISDSQKSSTSKASTSGI) shows a compositional bias: low complexity. Residues 249 to 266 (KSKHSHRPKSGKSSKGRS) show a composition bias toward basic residues. The span at 669–688 (ADPNISNKLNAGTDNTSKTE) shows a compositional bias: polar residues.

It belongs to the NPR3 family.

Mediates inactivation of the TORC1 complex in response to amino acid starvation. Required for meiotic nuclear division. The sequence is that of Nitrogen permease regulator 3 (NPR3) from Debaryomyces hansenii (strain ATCC 36239 / CBS 767 / BCRC 21394 / JCM 1990 / NBRC 0083 / IGC 2968) (Yeast).